The primary structure comprises 204 residues: Large ribosomal subunit protein uL4 (204 aa).

Residues 49 to 75 (TKGRSEVSGGGKKPWRQKGRGGARAGS) are disordered.

This sequence belongs to the universal ribosomal protein uL4 family. In terms of assembly, part of the 50S ribosomal subunit.

One of the primary rRNA binding proteins, this protein initially binds near the 5'-end of the 23S rRNA. It is important during the early stages of 50S assembly. It makes multiple contacts with different domains of the 23S rRNA in the assembled 50S subunit and ribosome. Functionally, forms part of the polypeptide exit tunnel. The protein is Large ribosomal subunit protein uL4 of Campylobacter hominis (strain ATCC BAA-381 / DSM 21671 / CCUG 45161 / LMG 19568 / NCTC 13146 / CH001A).